Reading from the N-terminus, the 138-residue chain is Transmembrane protein 170A (138 aa).

Residues 1–44 (MEGSEAGGGGLLQQILSLRLVPRVGNGTTYSSPLSTFPEMWYGV) are Lumenal-facing. The N-linked (GlcNAc...) asparagine glycan is linked to asparagine 26. Residues 45–65 (FLWALVSSLSFHVPAALLALF) form a helical membrane-spanning segment. Topologically, residues 66–79 (TLRHHKYGRFMSVS) are cytoplasmic. A helical membrane pass occupies residues 80-100 (LLLMGIVGPITAGILTSAAIA). Topologically, residues 101–110 (GVYRAAGKKM) are lumenal. A helical transmembrane segment spans residues 111–131 (IPFEALIFEVGQTFCVVVVSF). The Cytoplasmic segment spans residues 132–138 (LRILATL).

It belongs to the TMEM170 family.

It localises to the endoplasmic reticulum membrane. Its subcellular location is the nucleus envelope. Functionally, may regulate membrane morphogenesis in the endoplasmic reticulum (ER) by promoting ER sheet formation at the expense of ER tubules. The sequence is that of Transmembrane protein 170A (TMEM170A) from Gallus gallus (Chicken).